A 642-amino-acid polypeptide reads, in one-letter code: Putative ankyrin repeat protein L91 (642 aa).

14 ANK repeats span residues 42 to 76, 85 to 118, 153 to 186, 190 to 224, 227 to 256, 260 to 288, 292 to 322, 326 to 360, 365 to 397, 401 to 434, 438 to 470, 475 to 514, 518 to 550, and 554 to 587; these read HFTK…VKNP, EGWT…NPNI, NGFT…NVDS, NGET…TLHK, NGFT…DVNA, EGKS…EINH, NDIN…NPNE, NKNA…NPNI, SRTI…NVNA, EGRT…NVNH, DGAH…DVNI, KKWT…NVNA, YGNN…NVNH, and NGDT…NPNI.

The sequence is that of Putative ankyrin repeat protein L91 from Acanthamoeba polyphaga (Amoeba).